The chain runs to 1270 residues: MITNQTERLNFASTKNIPDYPDFLDVQVKSFKDFFQLETKSDERGNEGLYNTFMENFPITDTRNNFVLEFLDYFVDPPRYTIQECIERGLTYSVPLKARLKLYCTDPEHEDFETIVQDVYLGTIPYMTPSGTFVINGAECVVVSQLHRSPGVFFGQSFHANGTKLYSARVIPFKGSWIEFSTDINSVMYAYIDRKKKLPVTTLFRAIGFERDKDILEIFDLAEEIKVSKTGIKKYIGRRLAARVLNTWHEDFVDEDTGEVVSIERNEIILDRDTIIDKDNVEEIIDSNVKSILLHKEDNNQADYAIIHNTLQKDPTNSEKEAVEHIYRQLRNAEPPDEETARGIIDKLFFSDQRYNLGEVGRYRMNKKLDLDIPMDKQVLTKEDIITIVKYLIELINSKAEIDDIDHLSNRRVRTVGEQLSQQFGVGLARMARTIRERMNVRDNEVFTPIDLINAKTLSSVINSFFGTNQLSQFMDQTNPLAEITHKRRLSALGPGGLSRERAGFEVRDVHYTHYGRLCPIETPEGPNIGLISSLGVYAKVNGMGFIETPYRKVTDGVVDLESAPIYLSAEEEEGKMIAQANIEMDASGKITASNVIAREEGDFPVVEPSSVHYTDVAPNQIASISASLIPFLEHDDANRALMGSNMMRQAVPLIRPEAPIVGTGLERQVASDSRVLINAEGHGTVEYVDANIITIKYDRTEDERMVSFDADEKTYNLIKFRKTNQGTSINLKPIVRRGDRVVPGQVLSEGYATQNGELALGRNLKVAFMPWKGYNFEDAIVISEKVVRDDIFTSIHVDDYSLEVRDTKLGNEELTNDIPNVSEEATKDLDENGMIRIGAEVKPGDILIGKITPKGESDPTPEEKLLRAIFGDKAGDVKDASLKASPSLHGVVLDKKLFARAVKDKRKRTQDKDALGALEMEFETKFVELKDRLVEKLFLIVNGKTSQGVMNDLGEEVLPKGKKYTQKMLYAVEDFAHLSKGQWVADDATNKMVNDLIHNYKIKLNDLQGALRREKFTITVGDELPSGILKLAKIYIAKKRKLKVGDKMAGRHGNKGIVARIVRHEDMPFLEDGTPVDIVLNPLGVPSRMNIGQIYETVLGWAGMNLGRKFATPIFDGASLDEINALTDEANVPRFGHTYLYDGGTGERFAQKATVGVIYMLKLGHMVDDKMHARSIGPYSLITQQPLGGKAQFGGQRFGEMEVWALEAYGASSTLREILTVKSDDVIGRAKTYEAIVKGETMPEPGLPESFNVLMHELKGLGLDLRLEE.

The protein belongs to the RNA polymerase beta chain family. In terms of assembly, the RNAP catalytic core consists of 2 alpha, 1 beta, 1 beta' and 1 omega subunit. When a sigma factor is associated with the core the holoenzyme is formed, which can initiate transcription.

The catalysed reaction is RNA(n) + a ribonucleoside 5'-triphosphate = RNA(n+1) + diphosphate. In terms of biological role, DNA-dependent RNA polymerase catalyzes the transcription of DNA into RNA using the four ribonucleoside triphosphates as substrates. The sequence is that of DNA-directed RNA polymerase subunit beta from Flavobacterium johnsoniae (strain ATCC 17061 / DSM 2064 / JCM 8514 / BCRC 14874 / CCUG 350202 / NBRC 14942 / NCIMB 11054 / UW101) (Cytophaga johnsonae).